The following is a 105-amino-acid chain: Large ribosomal subunit protein uL24 (105 aa).

The protein belongs to the universal ribosomal protein uL24 family. As to quaternary structure, part of the 50S ribosomal subunit.

Functionally, one of two assembly initiator proteins, it binds directly to the 5'-end of the 23S rRNA, where it nucleates assembly of the 50S subunit. In terms of biological role, one of the proteins that surrounds the polypeptide exit tunnel on the outside of the subunit. The polypeptide is Large ribosomal subunit protein uL24 (Nitrosococcus oceani (strain ATCC 19707 / BCRC 17464 / JCM 30415 / NCIMB 11848 / C-107)).